Here is a 212-residue protein sequence, read N- to C-terminus: Probable GTP-binding protein EngB (212 aa).

The 173-residue stretch at 38 to 210 (SLPEIAFVGK…KASLAKCIKP (173 aa)) folds into the EngB-type G domain. GTP is bound by residues 46 to 53 (GKSNVGKS), 73 to 77 (GRTRQ), 91 to 94 (DLPG), 158 to 161 (TKSD), and 189 to 191 (VSS). Mg(2+)-binding residues include serine 53 and threonine 75.

The protein belongs to the TRAFAC class TrmE-Era-EngA-EngB-Septin-like GTPase superfamily. EngB GTPase family. Mg(2+) is required as a cofactor.

Functionally, necessary for normal cell division and for the maintenance of normal septation. This is Probable GTP-binding protein EngB from Rickettsia felis (strain ATCC VR-1525 / URRWXCal2) (Rickettsia azadi).